The primary structure comprises 668 residues: Break repair meiotic recombinase recruitment factor 1 (668 aa).

5 disordered regions span residues 1–142 (MTKR…AQSP), 155–333 (LQEA…GCSS), 349–465 (LEER…GGQN), 482–521 (VLEH…HSAD), and 642–668 (LGGK…WREL). The span at 114 to 125 (TRKEEMKDEDRG) shows a compositional bias: basic and acidic residues. The span at 166-180 (QADSARPEQSSQSPV) shows a compositional bias: polar residues. The span at 208–251 (SQDHLSEQGADDSKPETDRVPGDGGQKEHLPSIDSEGEKPDRGA) shows a compositional bias: basic and acidic residues. The span at 279-296 (TPASAPTSGPAPGLGPAS) shows a compositional bias: low complexity. The segment covering 305–316 (AQGSPDPQQTPS) has biased composition (polar residues). Position 370 is a phosphoserine (serine 370). The segment covering 391 to 400 (TGETTGESGE) has biased composition (low complexity).

As to quaternary structure, interacts with HSF2BP (via N-terminus) and BRCA2; the interaction with HSF2BP is direct and allows the formation of a ternary complex. The complex BRME1:HSF2BP:BRCA2 interacts with SPATA22, MEIOB and RAD51.

It is found in the chromosome. Meiotic recombination factor component of recombination bridges involved in meiotic double-strand break repair. Modulates the localization of recombinases DMC1:RAD51 to meiotic double-strand break (DSB) sites through the interaction with and stabilization of the BRCA2:HSF2BP complex during meiotic recombination. Indispensable for the DSB repair, homologous synapsis, and crossover formation that are needed for progression past metaphase I, is essential for spermatogenesis and male fertility. The polypeptide is Break repair meiotic recombinase recruitment factor 1 (Homo sapiens (Human)).